The following is a 49-amino-acid chain: uncharacterized protein (49 aa).

The helical transmembrane segment at 5–25 threads the bilayer; sequence LTTIFSVVIVLAIFLYFGLLI.

The protein belongs to the plectrovirus ORF12 protein family.

The protein localises to the host membrane. This is an uncharacterized protein from Spiroplasma virus SpV1-R8A2 B (SpV1).